The sequence spans 447 residues: Hemogen (447 aa).

The segment at 1 to 91 is disordered; sequence MDLGKDQSLS…EMKVELPSQL (91 aa). The interval 7-86 is necessary for nuclear localization; that stretch reads QSLSKLHQTP…RQQNTEMKVE (80 aa). Composition is skewed to basic and acidic residues over residues 14-25 and 35-49; these read QTPDHHQEESHV and RNREQLRKRKAEAQE. Residues 59–78 show a composition bias toward basic residues; sequence EKKHKRQRTGKRSERGRKRQ. Phosphoserine is present on residues serine 89 and serine 122. The tract at residues 137–156 is disordered; the sequence is QESVTLQENSSEYQATAVQN. Phosphoserine is present on serine 200. Disordered stretches follow at residues 210–280 and 306–337; these read AKVL…MAVP and AMSKDPSHKTTQETSVPDKYPPEMYQETPGSE. The residue at position 217 (threonine 217) is a Phosphothreonine. The span at 306–316 shows a compositional bias: basic and acidic residues; sequence AMSKDPSHKTT.

The protein localises to the nucleus. In terms of biological role, regulates the proliferation and differentiation of hematopoietic cells. Overexpression block the TPA-induced megakaryocytic differentiation in the K562 cell model. May also prevent cell apoptosis through the activation of the nuclear factor-kappa B (NF-kB). This is Hemogen (HEMGN) from Bos taurus (Bovine).